The chain runs to 424 residues: Gamma-glutamyl phosphate reductase (424 aa).

It belongs to the gamma-glutamyl phosphate reductase family.

It is found in the cytoplasm. It carries out the reaction L-glutamate 5-semialdehyde + phosphate + NADP(+) = L-glutamyl 5-phosphate + NADPH + H(+). It participates in amino-acid biosynthesis; L-proline biosynthesis; L-glutamate 5-semialdehyde from L-glutamate: step 2/2. Its function is as follows. Catalyzes the NADPH-dependent reduction of L-glutamate 5-phosphate into L-glutamate 5-semialdehyde and phosphate. The product spontaneously undergoes cyclization to form 1-pyrroline-5-carboxylate. The chain is Gamma-glutamyl phosphate reductase from Dehalococcoides mccartyi (strain CBDB1).